Reading from the N-terminus, the 122-residue chain is Small ribosomal subunit protein uS13 (122 aa).

Residues 97-122 are disordered; the sequence is PVRGQRTHTNARTRKGPAKAIAGKKK.

It belongs to the universal ribosomal protein uS13 family. In terms of assembly, part of the 30S ribosomal subunit. Forms a loose heterodimer with protein S19. Forms two bridges to the 50S subunit in the 70S ribosome.

Functionally, located at the top of the head of the 30S subunit, it contacts several helices of the 16S rRNA. In the 70S ribosome it contacts the 23S rRNA (bridge B1a) and protein L5 of the 50S subunit (bridge B1b), connecting the 2 subunits; these bridges are implicated in subunit movement. Contacts the tRNAs in the A and P-sites. The polypeptide is Small ribosomal subunit protein uS13 (Bartonella quintana (strain Toulouse) (Rochalimaea quintana)).